The primary structure comprises 121 residues: Large ribosomal subunit protein bL12 (121 aa).

It belongs to the bacterial ribosomal protein bL12 family. Homodimer. Part of the ribosomal stalk of the 50S ribosomal subunit. Forms a multimeric L10(L12)X complex, where L10 forms an elongated spine to which 2 to 4 L12 dimers bind in a sequential fashion. Binds GTP-bound translation factors.

In terms of biological role, forms part of the ribosomal stalk which helps the ribosome interact with GTP-bound translation factors. Is thus essential for accurate translation. This is Large ribosomal subunit protein bL12 from Clostridium perfringens (strain ATCC 13124 / DSM 756 / JCM 1290 / NCIMB 6125 / NCTC 8237 / Type A).